The sequence spans 508 residues: Photosystem II CP47 reaction center protein (508 aa).

A run of 6 helical transmembrane segments spans residues serine 21–serine 36, isoleucine 101–tryptophan 115, glycine 140–phenylalanine 156, isoleucine 203–serine 218, valine 237–valine 252, and serine 457–arginine 472.

This sequence belongs to the PsbB/PsbC family. PsbB subfamily. As to quaternary structure, PSII is composed of 1 copy each of membrane proteins PsbA, PsbB, PsbC, PsbD, PsbE, PsbF, PsbH, PsbI, PsbJ, PsbK, PsbL, PsbM, PsbT, PsbX, PsbY, PsbZ, Psb30/Ycf12, at least 3 peripheral proteins of the oxygen-evolving complex and a large number of cofactors. It forms dimeric complexes. The cofactor is Binds multiple chlorophylls. PSII binds additional chlorophylls, carotenoids and specific lipids..

It is found in the plastid. It localises to the chloroplast thylakoid membrane. One of the components of the core complex of photosystem II (PSII). It binds chlorophyll and helps catalyze the primary light-induced photochemical processes of PSII. PSII is a light-driven water:plastoquinone oxidoreductase, using light energy to abstract electrons from H(2)O, generating O(2) and a proton gradient subsequently used for ATP formation. This is Photosystem II CP47 reaction center protein from Eucalyptus globulus subsp. globulus (Tasmanian blue gum).